Here is a 262-residue protein sequence, read N- to C-terminus: Phosphatidylglycerol--prolipoprotein diacylglyceryl transferase (262 aa).

The next 4 membrane-spanning stretches (helical) occupy residues L9–V29, I41–A61, I80–V100, and L109–L129. Position 131 (R131) interacts with a 1,2-diacyl-sn-glycero-3-phospho-(1'-sn-glycerol). Transmembrane regions (helical) follow at residues Q167–F187, G197–M217, and G226–I246.

The protein belongs to the Lgt family.

It localises to the cell membrane. The enzyme catalyses L-cysteinyl-[prolipoprotein] + a 1,2-diacyl-sn-glycero-3-phospho-(1'-sn-glycerol) = an S-1,2-diacyl-sn-glyceryl-L-cysteinyl-[prolipoprotein] + sn-glycerol 1-phosphate + H(+). It participates in protein modification; lipoprotein biosynthesis (diacylglyceryl transfer). Catalyzes the transfer of the diacylglyceryl group from phosphatidylglycerol to the sulfhydryl group of the N-terminal cysteine of a prolipoprotein, the first step in the formation of mature lipoproteins. This is Phosphatidylglycerol--prolipoprotein diacylglyceryl transferase from Streptococcus pneumoniae (strain ATCC 700669 / Spain 23F-1).